A 618-amino-acid polypeptide reads, in one-letter code: Dihydroxy-acid dehydratase (618 aa).

Residue Asp81 participates in Mg(2+) binding. [2Fe-2S] cluster is bound at residue Cys122. The Mg(2+) site is built by Asp123 and Lys124. Position 124 is an N6-carboxylysine (Lys124). Residue Cys195 coordinates [2Fe-2S] cluster. Residue Glu491 participates in Mg(2+) binding. Residue Ser517 is the Proton acceptor of the active site.

This sequence belongs to the IlvD/Edd family. In terms of assembly, homodimer. It depends on [2Fe-2S] cluster as a cofactor. Mg(2+) serves as cofactor.

The enzyme catalyses (2R)-2,3-dihydroxy-3-methylbutanoate = 3-methyl-2-oxobutanoate + H2O. The catalysed reaction is (2R,3R)-2,3-dihydroxy-3-methylpentanoate = (S)-3-methyl-2-oxopentanoate + H2O. The protein operates within amino-acid biosynthesis; L-isoleucine biosynthesis; L-isoleucine from 2-oxobutanoate: step 3/4. It participates in amino-acid biosynthesis; L-valine biosynthesis; L-valine from pyruvate: step 3/4. Its function is as follows. Functions in the biosynthesis of branched-chain amino acids. Catalyzes the dehydration of (2R,3R)-2,3-dihydroxy-3-methylpentanoate (2,3-dihydroxy-3-methylvalerate) into 2-oxo-3-methylpentanoate (2-oxo-3-methylvalerate) and of (2R)-2,3-dihydroxy-3-methylbutanoate (2,3-dihydroxyisovalerate) into 2-oxo-3-methylbutanoate (2-oxoisovalerate), the penultimate precursor to L-isoleucine and L-valine, respectively. The sequence is that of Dihydroxy-acid dehydratase from Rhodopseudomonas palustris (strain ATCC BAA-98 / CGA009).